The primary structure comprises 250 residues: 5'-nucleotidase SurE (250 aa).

Residues D8, D9, S39, and N91 each contribute to the a divalent metal cation site.

The protein belongs to the SurE nucleotidase family. A divalent metal cation serves as cofactor.

It is found in the cytoplasm. It catalyses the reaction a ribonucleoside 5'-phosphate + H2O = a ribonucleoside + phosphate. Nucleotidase that shows phosphatase activity on nucleoside 5'-monophosphates. In Syntrophotalea carbinolica (strain DSM 2380 / NBRC 103641 / GraBd1) (Pelobacter carbinolicus), this protein is 5'-nucleotidase SurE.